We begin with the raw amino-acid sequence, 271 residues long: L-aspartate dehydrogenase (271 aa).

The NAD(+) site is built by Ala124 and Asn192. His222 is a catalytic residue.

This sequence belongs to the L-aspartate dehydrogenase family.

It carries out the reaction L-aspartate + NADP(+) + H2O = oxaloacetate + NH4(+) + NADPH + H(+). The enzyme catalyses L-aspartate + NAD(+) + H2O = oxaloacetate + NH4(+) + NADH + H(+). Its pathway is cofactor biosynthesis; NAD(+) biosynthesis; iminoaspartate from L-aspartate (dehydrogenase route): step 1/1. In terms of biological role, specifically catalyzes the NAD or NADP-dependent dehydrogenation of L-aspartate to iminoaspartate. The protein is L-aspartate dehydrogenase of Methanosarcina mazei (strain ATCC BAA-159 / DSM 3647 / Goe1 / Go1 / JCM 11833 / OCM 88) (Methanosarcina frisia).